A 130-amino-acid polypeptide reads, in one-letter code: Fluoride-specific ion channel FluC (130 aa).

The next 4 helical transmembrane spans lie at 3 to 23, 38 to 58, 67 to 87, and 102 to 122; these read FVFL…YFVG, LGTF…GHLA, FGIF…SYGL, and VSYV…GWFL. Na(+) is bound by residues glycine 77 and threonine 80.

It belongs to the fluoride channel Fluc/FEX (TC 1.A.43) family.

It localises to the cell inner membrane. It carries out the reaction fluoride(in) = fluoride(out). With respect to regulation, na(+) is not transported, but it plays an essential structural role and its presence is essential for fluoride channel function. In terms of biological role, fluoride-specific ion channel. Important for reducing fluoride concentration in the cell, thus reducing its toxicity. The sequence is that of Fluoride-specific ion channel FluC from Helicobacter pylori (strain HPAG1).